The chain runs to 198 residues: Recombination protein RecR (198 aa).

A C4-type zinc finger spans residues 57–72; sequence CRQCRTLSEEELCPQC. The Toprim domain occupies 80–174; that stretch reads SLLCVVEGPL…TLSRIAHGVP (95 aa).

This sequence belongs to the RecR family.

May play a role in DNA repair. It seems to be involved in an RecBC-independent recombinational process of DNA repair. It may act with RecF and RecO. In Pseudomonas paraeruginosa (strain DSM 24068 / PA7) (Pseudomonas aeruginosa (strain PA7)), this protein is Recombination protein RecR.